Reading from the N-terminus, the 85-residue chain is Large ribosomal subunit protein bL27 (85 aa).

The segment at 1–21 (MAHKKGQGSTQNNRDSAGRRL) is disordered.

Belongs to the bacterial ribosomal protein bL27 family.

The chain is Large ribosomal subunit protein bL27 from Wolinella succinogenes (strain ATCC 29543 / DSM 1740 / CCUG 13145 / JCM 31913 / LMG 7466 / NCTC 11488 / FDC 602W) (Vibrio succinogenes).